Consider the following 326-residue polypeptide: Tumor necrosis factor soluble receptor (326 aa).

Positions 1-16 (MFRLTLLLAYVACVYG) are cleaved as a signal peptide. TNFR-Cys repeat units lie at residues 27-62 (KCRG…TVCS), 63-104 (PCKN…DRVC), 105-147 (DCSA…VLCT), and 148-186 (KCPR…TSCT). Disulfide bonds link Cys-28-Cys-39, Cys-40-Cys-53, Cys-43-Cys-61, Cys-64-Cys-79, Cys-82-Cys-96, Cys-86-Cys-104, Cys-106-Cys-120, Cys-123-Cys-146, Cys-129-Cys-149, and Cys-164-Cys-185. Residue Asn-66 is glycosylated (N-linked (GlcNAc...) asparagine; by host). 3 N-linked (GlcNAc...) asparagine; by host glycosylation sites follow: Asn-181, Asn-205, and Asn-238.

Functionally, binds to TNF-alpha and beta. Probably prevents TNF to reach cellular target and thereby deampening the potential antiviral effects of the cytokine. This is Tumor necrosis factor soluble receptor from Oryctolagus cuniculus (Rabbit).